The following is a 211-amino-acid chain: Uracil phosphoribosyltransferase (211 aa).

5-phospho-alpha-D-ribose 1-diphosphate-binding positions include Arg78, Arg103, and 130–138; that span reads DPMLATGGT. Uracil-binding positions include Ile195 and 200 to 202; that span reads GDA. A 5-phospho-alpha-D-ribose 1-diphosphate-binding site is contributed by Asp201.

Belongs to the UPRTase family. Mg(2+) is required as a cofactor.

The enzyme catalyses UMP + diphosphate = 5-phospho-alpha-D-ribose 1-diphosphate + uracil. Its pathway is pyrimidine metabolism; UMP biosynthesis via salvage pathway; UMP from uracil: step 1/1. With respect to regulation, allosterically activated by GTP. Its function is as follows. Catalyzes the conversion of uracil and 5-phospho-alpha-D-ribose 1-diphosphate (PRPP) to UMP and diphosphate. The chain is Uracil phosphoribosyltransferase from Streptomyces coelicolor (strain ATCC BAA-471 / A3(2) / M145).